The following is a 1193-amino-acid chain: Protogenin (1193 aa).

A signal peptide spans 1-23 (MAPPVRPGMLPLLLLLLLPPLGS). 4 Ig-like domains span residues 24–124 (VPGV…AHLT), 126–217 (STIS…ASLT), 230–317 (PTII…ATLT), and 322–406 (PSFV…ARLT). Topologically, residues 24-944 (VPGVWSFSEL…YYHLDQKSMT (921 aa)) are extracellular. 2 disulfide bridges follow: C54–C107 and C150–C200. N84 carries an N-linked (GlcNAc...) asparagine glycan. Residue N238 is glycosylated (N-linked (GlcNAc...) asparagine). 2 cysteine pairs are disulfide-bonded: C251–C299 and C343–C390. 5 consecutive Fibronectin type-III domains span residues 416 to 510 (APYN…TLED), 512 to 608 (PLRP…TPKA), 613 to 712 (APKS…VRDR), 719 to 812 (PPHH…TLPE), and 817 to 912 (PPVG…VLPK). Residue N625 is glycosylated (N-linked (GlcNAc...) asparagine). The helical transmembrane segment at 945 to 965 (GIAVGVGIALTCILICVLILI) threads the bilayer. Residues 966–1193 (YRSKARKSSA…LRHAAESVPV (228 aa)) are Cytoplasmic-facing. Disordered stretches follow at residues 974–1018 (SASK…PMMP) and 1078–1193 (VLIS…SVPV). Polar residues-rich tracts occupy residues 978 to 990 (TTQS…SRAS) and 1086 to 1095 (PSSPGQTTSF). The span at 1105–1133 (DTEHSANSEGSHETGDSGRFSHESNDEIH) shows a compositional bias: basic and acidic residues. Residues 1136–1150 (SVISSTPPTSNSLTC) are compositionally biased toward polar residues.

This sequence belongs to the immunoglobulin superfamily. DCC family.

The protein resides in the membrane. Functionally, may play a role in anteroposterior axis elongation. In Rattus norvegicus (Rat), this protein is Protogenin.